The primary structure comprises 400 residues: MSLDNFSKGALAISGETTLLYQDIARSVQKEKGIKIVNFGIGQPDFPTFQKIRDEAKKALDGGFTAYTSAYGIDELRAKIASFLSSKYNTNISSKEVIITPGAKVSLYLAFLLYVNPGDEVIIFDPSYYSYPEVVKMLGGKPVYVKMKWREDTGFSLNLNDLENKITDKTKMVVLNNPHNPTGMVFDPKEIDQLIEIAKSKNLIVLSDEIYDYFVYEGKMRSVLEDPDWKNFSIYVNGFSKTFSMTGWRLGYVVAKENVIKKMSEIAANVYTCPTSFAQKAAVSAFDTFDDVKKMIDTFKKRRDVMYSELKKIKGIQVNKSQGAFYMFPYLGEILRKSGMSTKDFSVNLIKEKGVVTIPGEVFPLDAGKEFVRLSFAVDENVIKEGVQRMSEFINQLMRS.

Gly-42 and Asn-180 together coordinate L-aspartate. Residue Lys-241 is modified to N6-(pyridoxal phosphate)lysine. Residue Arg-373 coordinates L-aspartate.

It belongs to the class-I pyridoxal-phosphate-dependent aminotransferase family. In terms of assembly, homodimer. Pyridoxal 5'-phosphate is required as a cofactor.

It localises to the cytoplasm. It catalyses the reaction L-aspartate + 2-oxoglutarate = oxaloacetate + L-glutamate. This chain is Aspartate aminotransferase (aspC), found in Sulfolobus acidocaldarius (strain ATCC 33909 / DSM 639 / JCM 8929 / NBRC 15157 / NCIMB 11770).